The primary structure comprises 98 residues: Small ribosomal subunit protein bS18 (98 aa).

This sequence belongs to the bacterial ribosomal protein bS18 family. Part of the 30S ribosomal subunit. Forms a tight heterodimer with protein bS6.

Functionally, binds as a heterodimer with protein bS6 to the central domain of the 16S rRNA, where it helps stabilize the platform of the 30S subunit. This is Small ribosomal subunit protein bS18 from Flavobacterium psychrophilum (strain ATCC 49511 / DSM 21280 / CIP 103535 / JIP02/86).